A 504-amino-acid polypeptide reads, in one-letter code: Diacylglycerol O-acyltransferase 1B (504 aa).

A disordered region spans residues methionine 1 to glutamine 72. The span at serine 24–serine 41 shows a compositional bias: polar residues. Over residues aspartate 53–serine 65 the composition is skewed to low complexity. Transmembrane regions (helical) follow at residues histidine 108 to isoleucine 128, tryptophan 152 to glutamate 172, valine 184 to isoleucine 204, serine 209 to valine 229, tyrosine 259 to tyrosine 279, leucine 301 to glutamine 321, and valine 348 to leucine 368. Residues phenylalanine 375 to asparagine 381 carry the FYXDWWN motif motif. Transmembrane regions (helical) follow at residues alanine 416–valine 436, cysteine 438–isoleucine 458, and valine 471–leucine 491. Histidine 430 is an active-site residue.

Belongs to the membrane-bound acyltransferase family. Sterol o-acyltransferase subfamily. Highly expressed in flowers and pods. Expressed at low levels in roots, stems and leaves.

It localises to the endoplasmic reticulum membrane. The enzyme catalyses an acyl-CoA + a 1,2-diacyl-sn-glycerol = a triacyl-sn-glycerol + CoA. It functions in the pathway glycerolipid metabolism; triacylglycerol biosynthesis. Functionally, major contributors to triacylglycerol (TAG) synthesis and oil accumulation in developing seeds. Catalyzes the acylation of the sn-3 hydroxy group of sn-1,2-diacylglycerol using acyl-CoA. Has a marked preference for oleoyl-CoA and sn-1,2-dioleoylglycerol over vernoloyl-CoA and sn-1,2-divernoloylglycerol. The chain is Diacylglycerol O-acyltransferase 1B from Glycine max (Soybean).